A 450-amino-acid polypeptide reads, in one-letter code: 3-phosphoshikimate 1-carboxyvinyltransferase (450 aa).

Residues K28, S29, and R33 each coordinate 3-phosphoshikimate. Residue K28 coordinates phosphoenolpyruvate. Residues G100 and R128 each coordinate phosphoenolpyruvate. The 3-phosphoshikimate site is built by S173, Q175, D326, and K353. Q175 serves as a coordination point for phosphoenolpyruvate. D326 functions as the Proton acceptor in the catalytic mechanism. Positions 357 and 402 each coordinate phosphoenolpyruvate.

Belongs to the EPSP synthase family. Monomer.

It is found in the cytoplasm. It catalyses the reaction 3-phosphoshikimate + phosphoenolpyruvate = 5-O-(1-carboxyvinyl)-3-phosphoshikimate + phosphate. The protein operates within metabolic intermediate biosynthesis; chorismate biosynthesis; chorismate from D-erythrose 4-phosphate and phosphoenolpyruvate: step 6/7. Functionally, catalyzes the transfer of the enolpyruvyl moiety of phosphoenolpyruvate (PEP) to the 5-hydroxyl of shikimate-3-phosphate (S3P) to produce enolpyruvyl shikimate-3-phosphate and inorganic phosphate. This Brucella melitensis biotype 2 (strain ATCC 23457) protein is 3-phosphoshikimate 1-carboxyvinyltransferase.